The chain runs to 169 residues: NADH-quinone oxidoreductase subunit B (169 aa).

Residues Cys42, Cys43, Cys107, and Cys136 each contribute to the [4Fe-4S] cluster site.

Belongs to the complex I 20 kDa subunit family. In terms of assembly, NDH-1 is composed of 14 different subunits. Subunits NuoB, C, D, E, F, and G constitute the peripheral sector of the complex. [4Fe-4S] cluster serves as cofactor.

It localises to the cell inner membrane. The enzyme catalyses a quinone + NADH + 5 H(+)(in) = a quinol + NAD(+) + 4 H(+)(out). Its function is as follows. NDH-1 shuttles electrons from NADH, via FMN and iron-sulfur (Fe-S) centers, to quinones in the respiratory chain. The immediate electron acceptor for the enzyme in this species is believed to be ubiquinone. Couples the redox reaction to proton translocation (for every two electrons transferred, four hydrogen ions are translocated across the cytoplasmic membrane), and thus conserves the redox energy in a proton gradient. This Helicobacter hepaticus (strain ATCC 51449 / 3B1) protein is NADH-quinone oxidoreductase subunit B.